Here is a 729-residue protein sequence, read N- to C-terminus: Heterogeneous nuclear ribonucleoprotein M (729 aa).

The segment covering 1–13 (MAAGVEAAAEVAA) has biased composition (low complexity). The interval 1–65 (MAAGVEAAAE…GGNRFEPYSN (65 aa)) is disordered. An N-acetylalanine modification is found at Ala2. Lys17 participates in a covalent cross-link: Glycyl lysine isopeptide (Lys-Gly) (interchain with G-Cter in SUMO2). Ser29 is subject to Phosphoserine. Residues Lys37, Lys68, and Lys82 each participate in a glycyl lysine isopeptide (Lys-Gly) (interchain with G-Cter in SUMO2) cross-link. The span at 37–49 (KGEERPTQNEKRK) shows a compositional bias: basic and acidic residues. RRM domains are found at residues 70–148 (YRAF…EDPD) and 203–280 (STVF…MDER). Phosphoserine is present on Ser85. Residues Lys87 and Lys126 each participate in a glycyl lysine isopeptide (Lys-Gly) (interchain with G-Cter in SUMO2) cross-link. Residue Lys133 is modified to N6-acetyllysine; alternate. A Glycyl lysine isopeptide (Lys-Gly) (interchain with G-Cter in SUMO2); alternate cross-link involves residue Lys133. Residues Lys142 and Lys144 each participate in a glycyl lysine isopeptide (Lys-Gly) (interchain with G-Cter in SUMO2) cross-link. At Ser203 the chain carries Phosphoserine. Lys220 participates in a covalent cross-link: Glycyl lysine isopeptide (Lys-Gly) (interchain with G-Cter in SUMO2). An N6-acetyllysine; alternate modification is found at Lys276. Lys276 is covalently cross-linked (Glycyl lysine isopeptide (Lys-Gly) (interchain with G-Cter in SUMO2); alternate). Glycyl lysine isopeptide (Lys-Gly) (interchain with G-Cter in SUMO2) cross-links involve residues Lys284 and Lys344. Residues Ser364 and Ser376 each carry the phosphoserine modification. Glycyl lysine isopeptide (Lys-Gly) (interchain with G-Cter in SUMO2) cross-links involve residues Lys380 and Lys387. Residue Ser396 is modified to Phosphoserine. A run of 4 repeats spans residues 399-404 (GIERMG), 406-411 (GIDRIS), 414-419 (GMERMG), and 425-430 (GMDRVG). Positions 399 to 607 (GIERMGPGID…ALGAGIERMG (209 aa)) are 27 X 6 AA repeats of [GEVSTPAN]-[ILMV]-[DE]-[RH]-[MLVI]-[GAV]. A Phosphoserine modification is found at Ser431. Repeat copies occupy residues 432 to 437 (EIERMG), 439 to 444 (VMDRMG), and 445 to 450 (SVERMG). Ser451 bears the Phosphoserine mark. Repeat copies occupy residues 452-457 (SIERMG), 460-465 (GLDHMA), 467-472 (SIERMG), and 474-479 (TMERIG). Ser467 is subject to Phosphoserine. Residue Ser480 is modified to Phosphoserine. Tandem repeats lie at residues 481–486 (GVERMG), 492–497 (GLERMA), 499–504 (PIDRVG), 506–511 (TIERMG), 513–518 (GVERMG), 520–525 (AIERMG), 527–532 (SMDRMV), 539–544 (SLERMG), 546–551 (VMDRMA), 553–558 (GLERMG), 561–566 (NLERMG), 567–571 (LERMG), 574–579 (SLERMG), 580–584 (LERMG), 587–592 (SLERMG), and 602–607 (GIERMG). Omega-N-methylarginine is present on Arg495. At Ser527 the chain carries Phosphoserine. Residue Ser574 is modified to Phosphoserine. Ser587 bears the Phosphoserine mark. Phosphoserine is present on residues Ser617, Ser632, and Ser636. Residue Lys650 forms a Glycyl lysine isopeptide (Lys-Gly) (interchain with G-Cter in SUMO2) linkage. The region spanning 652–728 (CQIFVRNLPF…REIDVRIDRN (77 aa)) is the RRM 3 domain. Thr664 is modified (phosphothreonine). A Glycyl lysine isopeptide (Lys-Gly) (interchain with G-Cter in SUMO2) cross-link involves residue Lys666. Residue Lys671 is modified to N6-acetyllysine. Residues Lys684 and Lys691 each participate in a glycyl lysine isopeptide (Lys-Gly) (interchain with G-Cter in SUMO2) cross-link. At Lys697 the chain carries N6-acetyllysine; alternate. Lys697 is covalently cross-linked (Glycyl lysine isopeptide (Lys-Gly) (interchain with G-Cter in SUMO2); alternate). A Glycyl lysine isopeptide (Lys-Gly) (interchain with G-Cter in SUMO1); alternate cross-link involves residue Lys697. Ser700 carries the post-translational modification Phosphoserine. Residue Lys715 forms a Glycyl lysine isopeptide (Lys-Gly) (interchain with G-Cter in SUMO2) linkage.

Identified in the spliceosome C complex. Interacts with PPIA/CYPA. Sumoylated.

The protein resides in the nucleus. Pre-mRNA binding protein in vivo, binds avidly to poly(G) and poly(U) RNA homopolymers in vitro. Involved in splicing. Acts as a receptor for carcinoembryonic antigen in Kupffer cells, may initiate a series of signaling events leading to tyrosine phosphorylation of proteins and induction of IL-1 alpha, IL-6, IL-10 and tumor necrosis factor alpha cytokines. In Mus musculus (Mouse), this protein is Heterogeneous nuclear ribonucleoprotein M (Hnrnpm).